The sequence spans 775 residues: Ribonucleoside-diphosphate reductase large subunit (775 aa).

Substrate contacts are provided by residues threonine 200, 215 to 216, glycine 246, 427 to 431, and 606 to 610; these read SC, NLCTE, and PTVSS. A disulfide bridge links cysteine 216 with cysteine 444. Catalysis depends on asparagine 427, which acts as the Proton acceptor. Residue cysteine 429 is the Cysteine radical intermediate of the active site. Glutamate 431 functions as the Proton acceptor in the catalytic mechanism.

Belongs to the ribonucleoside diphosphate reductase large chain family. In terms of assembly, heterotetramer composed of a homodimer of the large subunit (R1) and a homodimer of the small subunit (R2). Larger multisubunit protein complex are also active, composed of (R1)n(R2)n.

The catalysed reaction is a 2'-deoxyribonucleoside 5'-diphosphate + [thioredoxin]-disulfide + H2O = a ribonucleoside 5'-diphosphate + [thioredoxin]-dithiol. Its function is as follows. Ribonucleoside-diphosphate reductase holoenzyme provides the precursors necessary for viral DNA synthesis. Allows virus growth in non-dividing cells, as well as reactivation from latency in infected hosts. Catalyzes the biosynthesis of deoxyribonucleotides from the corresponding ribonucleotides. This Homo sapiens (Human) protein is Ribonucleoside-diphosphate reductase large subunit.